We begin with the raw amino-acid sequence, 463 residues long: A-type ATP synthase subunit B (463 aa).

This sequence belongs to the ATPase alpha/beta chains family. Has multiple subunits with at least A(3), B(3), C, D, E, F, H, I and proteolipid K(x).

The protein resides in the cell membrane. Functionally, component of the A-type ATP synthase that produces ATP from ADP in the presence of a proton gradient across the membrane. The B chain is a regulatory subunit. This chain is A-type ATP synthase subunit B, found in Thermococcus sp. (strain KI).